The sequence spans 179 residues: Large ribosomal subunit protein uL6 (179 aa).

It belongs to the universal ribosomal protein uL6 family. As to quaternary structure, part of the 50S ribosomal subunit.

Its function is as follows. This protein binds to the 23S rRNA, and is important in its secondary structure. It is located near the subunit interface in the base of the L7/L12 stalk, and near the tRNA binding site of the peptidyltransferase center. This is Large ribosomal subunit protein uL6 from Trichlorobacter lovleyi (strain ATCC BAA-1151 / DSM 17278 / SZ) (Geobacter lovleyi).